The chain runs to 959 residues: Probable LRR receptor-like serine/threonine-protein kinase At5g37450 (959 aa).

The signal sequence occupies residues 1–24 (MKEMMGVVGIILVVSSCCLSLLDA). Residues 25–565 (QEITHPTDVS…SGMSIGVSVG (541 aa)) lie on the Extracellular side of the membrane. 4 N-linked (GlcNAc...) asparagine glycosylation sites follow: N62, N88, N102, and N123. LRR repeat units lie at residues 79–100 (VKEL…LGLL), 101–124 (SNLT…LGNL), 125–148 (THLI…LGSL), 149–172 (SNLL…LANL), 173–198 (KKLK…TLTN), 200–220 (LHFL…LAQM), 221–244 (PSLR…SYGS), 246–268 (PNLV…LSKS), and 269–292 (LVLY…KFSA). N182 carries an N-linked (GlcNAc...) asparagine glycan. Residues N293, N311, N327, N358, N369, and N510 are each glycosylated (N-linked (GlcNAc...) asparagine). LRR repeat units follow at residues 294-314 (ITTI…NFSG), 315-338 (LPRL…IWEN), and 341-366 (LKAE…LLNP). The chain crosses the membrane as a helical span at residues 566–586 (IIIGAIAFFLVLSSLALVFFI). At 587–959 (KRSKRKRKTR…SGVIPSIAPR (373 aa)) the chain is on the cytoplasmic side. The Protein kinase domain maps to 631–906 (FSDLSQIGRG…RELENIYGLI (276 aa)). ATP is bound by residues 637 to 645 (IGRGGYGKV) and K659. The Proton acceptor role is filled by D755.

This sequence belongs to the protein kinase superfamily. Ser/Thr protein kinase family.

The protein localises to the membrane. The enzyme catalyses L-seryl-[protein] + ATP = O-phospho-L-seryl-[protein] + ADP + H(+). It catalyses the reaction L-threonyl-[protein] + ATP = O-phospho-L-threonyl-[protein] + ADP + H(+). This Arabidopsis thaliana (Mouse-ear cress) protein is Probable LRR receptor-like serine/threonine-protein kinase At5g37450.